We begin with the raw amino-acid sequence, 156 residues long: Small ribosomal subunit protein uS7 (156 aa).

Belongs to the universal ribosomal protein uS7 family. As to quaternary structure, part of the 30S ribosomal subunit. Contacts proteins S9 and S11.

Its function is as follows. One of the primary rRNA binding proteins, it binds directly to 16S rRNA where it nucleates assembly of the head domain of the 30S subunit. Is located at the subunit interface close to the decoding center, probably blocks exit of the E-site tRNA. The chain is Small ribosomal subunit protein uS7 from Streptococcus pyogenes serotype M3 (strain ATCC BAA-595 / MGAS315).